Reading from the N-terminus, the 270-residue chain is Monofunctional glycosyltransferase (270 aa).

The span at 1–10 shows a compositional bias: polar residues; the sequence is MKRSQRMNNS. Positions 1-36 are disordered; sequence MKRSQRMNNSPERHSQYRNEPHYNTYYQPVGKPPKK. A compositionally biased stretch (basic and acidic residues) spans 11 to 21; that stretch reads PERHSQYRNEP. Residues 42 to 62 traverse the membrane as a helical segment; sequence IFLRLFIIFVFIYALFIGLMY.

Belongs to the glycosyltransferase 51 family.

It localises to the cell membrane. It carries out the reaction [GlcNAc-(1-&gt;4)-Mur2Ac(oyl-L-Ala-gamma-D-Glu-L-Lys-D-Ala-D-Ala)](n)-di-trans,octa-cis-undecaprenyl diphosphate + beta-D-GlcNAc-(1-&gt;4)-Mur2Ac(oyl-L-Ala-gamma-D-Glu-L-Lys-D-Ala-D-Ala)-di-trans,octa-cis-undecaprenyl diphosphate = [GlcNAc-(1-&gt;4)-Mur2Ac(oyl-L-Ala-gamma-D-Glu-L-Lys-D-Ala-D-Ala)](n+1)-di-trans,octa-cis-undecaprenyl diphosphate + di-trans,octa-cis-undecaprenyl diphosphate + H(+). It participates in cell wall biogenesis; peptidoglycan biosynthesis. Peptidoglycan polymerase that catalyzes glycan chain elongation using lipid-linked disaccharide-pentapeptide as the substrate. This is Monofunctional glycosyltransferase from Staphylococcus haemolyticus (strain JCSC1435).